Here is a 429-residue protein sequence, read N- to C-terminus: Adenylosuccinate synthetase (429 aa).

Residues 12 to 18 (GDEGKGK) and 40 to 42 (GHT) contribute to the GTP site. D13 serves as the catalytic Proton acceptor. Positions 13 and 40 each coordinate Mg(2+). Residues 13-16 (DEGK), 38-41 (NAGH), T128, R142, Q223, T238, and R302 contribute to the IMP site. Catalysis depends on H41, which acts as the Proton donor. 298 to 304 (VNTGRKR) is a binding site for substrate. GTP is bound by residues R304, 330–332 (KLD), and 412–414 (GVG).

The protein belongs to the adenylosuccinate synthetase family. In terms of assembly, homodimer. It depends on Mg(2+) as a cofactor.

It is found in the cytoplasm. The catalysed reaction is IMP + L-aspartate + GTP = N(6)-(1,2-dicarboxyethyl)-AMP + GDP + phosphate + 2 H(+). The protein operates within purine metabolism; AMP biosynthesis via de novo pathway; AMP from IMP: step 1/2. Plays an important role in the de novo pathway of purine nucleotide biosynthesis. Catalyzes the first committed step in the biosynthesis of AMP from IMP. In Corynebacterium glutamicum (strain R), this protein is Adenylosuccinate synthetase.